A 364-amino-acid polypeptide reads, in one-letter code: tRNA 2-selenouridine synthase (364 aa).

The region spanning 14–137 (LLADTPLIDV…LRQTAIQATW (124 aa)) is the Rhodanese domain. Residue Cys97 is the S-selanylcysteine intermediate of the active site.

This sequence belongs to the SelU family. Monomer.

It carries out the reaction 5-methylaminomethyl-2-thiouridine(34) in tRNA + selenophosphate + (2E)-geranyl diphosphate + H2O + H(+) = 5-methylaminomethyl-2-selenouridine(34) in tRNA + (2E)-thiogeraniol + phosphate + diphosphate. The enzyme catalyses 5-methylaminomethyl-2-thiouridine(34) in tRNA + (2E)-geranyl diphosphate = 5-methylaminomethyl-S-(2E)-geranyl-thiouridine(34) in tRNA + diphosphate. It catalyses the reaction 5-methylaminomethyl-S-(2E)-geranyl-thiouridine(34) in tRNA + selenophosphate + H(+) = 5-methylaminomethyl-2-(Se-phospho)selenouridine(34) in tRNA + (2E)-thiogeraniol. The catalysed reaction is 5-methylaminomethyl-2-(Se-phospho)selenouridine(34) in tRNA + H2O = 5-methylaminomethyl-2-selenouridine(34) in tRNA + phosphate. Functionally, involved in the post-transcriptional modification of the uridine at the wobble position (U34) of tRNA(Lys), tRNA(Glu) and tRNA(Gln). Catalyzes the conversion of 2-thiouridine (S2U-RNA) to 2-selenouridine (Se2U-RNA). Acts in a two-step process involving geranylation of 2-thiouridine (S2U) to S-geranyl-2-thiouridine (geS2U) and subsequent selenation of the latter derivative to 2-selenouridine (Se2U) in the tRNA chain. This chain is tRNA 2-selenouridine synthase, found in Salmonella agona (strain SL483).